The chain runs to 196 residues: DnaA initiator-associating protein DiaA (196 aa).

The region spanning 34–196 is the SIS domain; the sequence is LVHSLLNGNK…DNTLFPHQDD (163 aa).

This sequence belongs to the SIS family. DiaA subfamily. Homotetramer; dimer of dimers.

Functionally, required for the timely initiation of chromosomal replication via direct interactions with the DnaA initiator protein. In Salmonella enteritidis PT4 (strain P125109), this protein is DnaA initiator-associating protein DiaA.